The following is a 376-amino-acid chain: uncharacterized protein (376 aa).

One can recognise a Peptidase M14 domain in the interval 82 to 372 (KIYDDSAVEK…ATSGILWRAL (291 aa)). Residues His138, Glu141, and His283 each coordinate Zn(2+). Glu344 serves as the catalytic Proton donor/acceptor.

Belongs to the peptidase M14 family. The cofactor is Zn(2+).

This is an uncharacterized protein from Bacillus subtilis (strain 168).